The primary structure comprises 450 residues: ATP-dependent protease ATPase subunit HslU (450 aa).

ATP is bound by residues Val-29, Gly-71 to Glu-76, Asp-261, Glu-328, and Arg-400.

Belongs to the ClpX chaperone family. HslU subfamily. In terms of assembly, a double ring-shaped homohexamer of HslV is capped on each side by a ring-shaped HslU homohexamer. The assembly of the HslU/HslV complex is dependent on binding of ATP.

It is found in the cytoplasm. Its function is as follows. ATPase subunit of a proteasome-like degradation complex; this subunit has chaperone activity. The binding of ATP and its subsequent hydrolysis by HslU are essential for unfolding of protein substrates subsequently hydrolyzed by HslV. HslU recognizes the N-terminal part of its protein substrates and unfolds these before they are guided to HslV for hydrolysis. The chain is ATP-dependent protease ATPase subunit HslU from Rickettsia peacockii (strain Rustic).